Reading from the N-terminus, the 778-residue chain is Probable cation-transporting ATPase exp7 (778 aa).

Residues 1-37 (MDKNKIMGLTQREVKERQAEGLVNDFTASASTSTWQI) are Cytoplasmic-facing. The chain crosses the membrane as a helical span at residues 38-57 (VKRNVFTLFNALNFAIALAL). At 58 to 64 (AFVQAWS) the chain is on the extracellular side. The chain crosses the membrane as a helical span at residues 65-84 (NLVFFAVICFNAFSGIVTEL). The Cytoplasmic segment spans residues 85–209 (RAKHMVDKLN…PINSRIMKSL (125 aa)). The helical transmembrane segment at 210–229 (DKLAGFTGKIIIPFGLALLL) threads the bilayer. Topologically, residues 230 to 242 (EALLLKGLPLKSS) are extracellular. The helical transmembrane segment at 243–260 (VVNSSTALLGMLPKGIAL) threads the bilayer. Topologically, residues 261-586 (LTITSLLTAV…FEGRRVVNNI (326 aa)) are cytoplasmic. Asp298 acts as the 4-aspartylphosphate intermediate in catalysis. The Mg(2+) site is built by Asp532 and Asp536. Residues 587–606 (AHIAPIFLIKTIYSFLLAVI) traverse the membrane as a helical segment. Residues 607–624 (CIASALLGRSEWILIFPF) lie on the Extracellular side of the membrane. The helical transmembrane segment at 625-645 (IPIQITMIDQFVEGFPPFVLT) threads the bilayer. The Cytoplasmic segment spans residues 646 to 663 (FERNIKPVEQNFLRKSML). A helical transmembrane segment spans residues 664–684 (RALPSALMVVFSVLFVKMFGA). Topologically, residues 685-689 (SQGWS) are extracellular. Residues 690-708 (ELEISTLLYYLLGSIGFLS) form a helical membrane-spanning segment. The Cytoplasmic portion of the chain corresponds to 709 to 716 (VFRACMPF). A helical membrane pass occupies residues 717–739 (TLWRVLLIVWSVGGFLATALFPR). The Extracellular portion of the chain corresponds to 740 to 757 (IQKLLEISTLTEQTLPVY). Residues 758–777 (GVMMLVFTVIFILTSRYQAK) form a helical membrane-spanning segment. Lys778 is a topological domain (cytoplasmic).

The protein belongs to the cation transport ATPase (P-type) (TC 3.A.3) family.

The protein resides in the cell membrane. It catalyses the reaction ATP + H2O = ADP + phosphate + H(+). This chain is Probable cation-transporting ATPase exp7 (exp7), found in Streptococcus pneumoniae serotype 4 (strain ATCC BAA-334 / TIGR4).